The sequence spans 351 residues: Probable protein phosphatase 2C 8 (351 aa).

The disordered stretch occupies residues M1–F63. Residues R54 to F63 show a composition bias toward basic and acidic residues. The 275-residue stretch at E74–F348 folds into the PPM-type phosphatase domain. Residues D114, G115, D295, and D339 each coordinate Mn(2+).

The protein belongs to the PP2C family. It depends on Mg(2+) as a cofactor. Mn(2+) serves as cofactor.

The enzyme catalyses O-phospho-L-seryl-[protein] + H2O = L-seryl-[protein] + phosphate. It catalyses the reaction O-phospho-L-threonyl-[protein] + H2O = L-threonyl-[protein] + phosphate. The chain is Probable protein phosphatase 2C 8 from Arabidopsis thaliana (Mouse-ear cress).